Consider the following 167-residue polypeptide: Crossover junction endodeoxyribonuclease RuvC (167 aa).

Residues aspartate 11, glutamate 71, and aspartate 143 contribute to the active site. Mg(2+)-binding residues include aspartate 11, glutamate 71, and aspartate 143.

The protein belongs to the RuvC family. Homodimer which binds Holliday junction (HJ) DNA. The HJ becomes 2-fold symmetrical on binding to RuvC with unstacked arms; it has a different conformation from HJ DNA in complex with RuvA. In the full resolvosome a probable DNA-RuvA(4)-RuvB(12)-RuvC(2) complex forms which resolves the HJ. Mg(2+) serves as cofactor.

It localises to the cytoplasm. The enzyme catalyses Endonucleolytic cleavage at a junction such as a reciprocal single-stranded crossover between two homologous DNA duplexes (Holliday junction).. The RuvA-RuvB-RuvC complex processes Holliday junction (HJ) DNA during genetic recombination and DNA repair. Endonuclease that resolves HJ intermediates. Cleaves cruciform DNA by making single-stranded nicks across the HJ at symmetrical positions within the homologous arms, yielding a 5'-phosphate and a 3'-hydroxyl group; requires a central core of homology in the junction. The consensus cleavage sequence is 5'-(A/T)TT(C/G)-3'. Cleavage occurs on the 3'-side of the TT dinucleotide at the point of strand exchange. HJ branch migration catalyzed by RuvA-RuvB allows RuvC to scan DNA until it finds its consensus sequence, where it cleaves and resolves the cruciform DNA. The protein is Crossover junction endodeoxyribonuclease RuvC of Bartonella bacilliformis (strain ATCC 35685 / KC583 / Herrer 020/F12,63).